The sequence spans 74 residues: uncharacterized protein (74 aa).

The interval Asp55–Gly74 is disordered.

This is an uncharacterized protein from Listeria innocua serovar 6a (strain ATCC BAA-680 / CLIP 11262).